The following is a 301-amino-acid chain: Transcriptional activator protein NhaR (301 aa).

An HTH lysR-type domain is found at 6-63; sequence INYNHLYYFWHVYKEGSVVGAAEALYLTPQTITGQIRALEERLQGKLFKRKGRGLEPS. The segment at residues 23–42 is a DNA-binding region (H-T-H motif); the sequence is VVGAAEALYLTPQTITGQIR.

Belongs to the LysR transcriptional regulatory family.

Its subcellular location is the cytoplasm. Functionally, plays a role in the positive regulation of NhaA. The chain is Transcriptional activator protein NhaR (nhaR) from Escherichia coli (strain K12).